Reading from the N-terminus, the 340-residue chain is Organic solute transporter subunit alpha (340 aa).

Residues 1–48 are Extracellular-facing; sequence MEPGRTQIKLDPRYTADLLEVLKTNYGIPSACFSQPPTAAQLLRALGP. Residues 49-69 traverse the membrane as a helical segment; it reads VELALTSILTLLALGSIAIFL. Residues 70-87 lie on the Cytoplasmic side of the membrane; sequence EDAVYLYKNTLCPIKRRT. The helical transmembrane segment at 88–108 threads the bilayer; that stretch reads LLWKSSAPTVVSVLCCFGLWI. Residues 109–118 are Extracellular-facing; it reads PRSLVLVEMT. The helical transmembrane segment at 119-139 threads the bilayer; the sequence is ITSFYAVCFYLLMLVMVEGFG. Residues 140–181 lie on the Cytoplasmic side of the membrane; sequence GKEAVLRTLRDTPMMVHTGPCCCCCPCCPRLLLTRKKLQLLM. The chain crosses the membrane as a helical span at residues 182-202; sequence LGPFQYAFLKITLTLVGLFLV. The Extracellular portion of the chain corresponds to 203 to 218; that stretch reads PDGIYDPADISEGSTA. A helical membrane pass occupies residues 219 to 239; that stretch reads LWINTFLGVSTLLALWTLGII. Topologically, residues 240-255 are cytoplasmic; it reads SRQARLHLGEQNMGAK. The chain crosses the membrane as a helical span at residues 256–276; the sequence is FALFQVLLILTALQPSIFSVL. Residues 277–294 are Extracellular-facing; the sequence is ANGGQIACSPPYSSKTRS. A helical membrane pass occupies residues 295–317; sequence QVMNCHLLILETFLMTVLTRMYY. The Cytoplasmic segment spans residues 318 to 340; it reads RRKDHKVGYETFSSPDLDLNLKA. Ser-330 carries the post-translational modification Phosphoserine.

This sequence belongs to the OST-alpha family. Interacts with SLC51B. The Ost-alpha/Ost-beta complex is a heterodimer composed of alpha (SLC51A) and beta (SLC51B) subunit. In terms of tissue distribution, widely expressed with a high expression in ileum. Expressed in testis, colon, liver, small intestine, kidney, ovary and adrenal gland; and at low levels in heart, lung, brain, pituitary, thyroid gland, uterus, prostate, mammary gland and fat.

Its subcellular location is the cell membrane. The protein localises to the endoplasmic reticulum membrane. The catalysed reaction is taurocholate(out) = taurocholate(in). It catalyses the reaction estrone 3-sulfate(out) = estrone 3-sulfate(in). The enzyme catalyses dehydroepiandrosterone 3-sulfate(out) = dehydroepiandrosterone 3-sulfate(in). It carries out the reaction tauroursodeoxycholate(out) = tauroursodeoxycholate(in). The catalysed reaction is glycoursodeoxycholate(out) = glycoursodeoxycholate(in). It catalyses the reaction glycocholate(out) = glycocholate(in). The enzyme catalyses taurochenodeoxycholate(out) = taurochenodeoxycholate(in). It carries out the reaction glycochenodeoxycholate(out) = glycochenodeoxycholate(in). The catalysed reaction is taurodeoxycholate(out) = taurodeoxycholate(in). It catalyses the reaction glycodeoxycholate(out) = glycodeoxycholate(in). The enzyme catalyses prostaglandin E2(out) = prostaglandin E2(in). Its function is as follows. Essential component of the Ost-alpha/Ost-beta complex, a heterodimer that acts as the intestinal basolateral transporter responsible for bile acid export from enterocytes into portal blood. Efficiently transports the major species of bile acids (taurocholate). Taurine conjugates are transported more efficiently across the basolateral membrane than glycine-conjugated bile acids. Can also transport steroids such as estrone 3-sulfate and dehydroepiandrosterone 3-sulfate, therefore playing a role in the enterohepatic circulation of sterols. Able to transport eicosanoids such as prostaglandin E2. The sequence is that of Organic solute transporter subunit alpha (SLC51A) from Homo sapiens (Human).